An 86-amino-acid chain; its full sequence is Small ribosomal subunit protein bS16 (86 aa).

Belongs to the bacterial ribosomal protein bS16 family.

The polypeptide is Small ribosomal subunit protein bS16 (Thermoanaerobacter sp. (strain X514)).